The primary structure comprises 399 residues: CCA-adding enzyme (399 aa).

G32 and R35 together coordinate ATP. The CTP site is built by G32 and R35. Mg(2+) is bound by residues D45 and D47. Residues R116, D159, R162, R165, and R168 each coordinate ATP. CTP is bound by residues R116, D159, R162, R165, and R168.

The protein belongs to the tRNA nucleotidyltransferase/poly(A) polymerase family. Bacterial CCA-adding enzyme type 3 subfamily. Homodimer. Mg(2+) serves as cofactor.

It catalyses the reaction a tRNA precursor + 2 CTP + ATP = a tRNA with a 3' CCA end + 3 diphosphate. The enzyme catalyses a tRNA with a 3' CCA end + 2 CTP + ATP = a tRNA with a 3' CCACCA end + 3 diphosphate. In terms of biological role, catalyzes the addition and repair of the essential 3'-terminal CCA sequence in tRNAs without using a nucleic acid template. Adds these three nucleotides in the order of C, C, and A to the tRNA nucleotide-73, using CTP and ATP as substrates and producing inorganic pyrophosphate. tRNA 3'-terminal CCA addition is required both for tRNA processing and repair. Also involved in tRNA surveillance by mediating tandem CCA addition to generate a CCACCA at the 3' terminus of unstable tRNAs. While stable tRNAs receive only 3'-terminal CCA, unstable tRNAs are marked with CCACCA and rapidly degraded. The protein is CCA-adding enzyme of Streptococcus pneumoniae serotype 19F (strain G54).